The primary structure comprises 267 residues: Tryptophan synthase alpha chain (267 aa).

Catalysis depends on proton acceptor residues glutamate 49 and aspartate 60.

It belongs to the TrpA family. In terms of assembly, tetramer of two alpha and two beta chains.

It carries out the reaction (1S,2R)-1-C-(indol-3-yl)glycerol 3-phosphate + L-serine = D-glyceraldehyde 3-phosphate + L-tryptophan + H2O. It participates in amino-acid biosynthesis; L-tryptophan biosynthesis; L-tryptophan from chorismate: step 5/5. In terms of biological role, the alpha subunit is responsible for the aldol cleavage of indoleglycerol phosphate to indole and glyceraldehyde 3-phosphate. In Acaryochloris marina (strain MBIC 11017), this protein is Tryptophan synthase alpha chain.